The sequence spans 835 residues: Protein translocase subunit SecA (835 aa).

Residues Gln85, 103-107 (GEGKT), and Asp492 contribute to the ATP site. The disordered stretch occupies residues 788 to 807 (VQGEAVHPSSDGEEAKKKPV). The Zn(2+) site is built by Cys819, Cys821, Cys830, and Cys831.

It belongs to the SecA family. As to quaternary structure, monomer and homodimer. Part of the essential Sec protein translocation apparatus which comprises SecA, SecYEG and auxiliary proteins SecDF. Other proteins may also be involved. It depends on Zn(2+) as a cofactor.

It is found in the cell membrane. The protein localises to the cytoplasm. It carries out the reaction ATP + H2O + cellular proteinSide 1 = ADP + phosphate + cellular proteinSide 2.. Part of the Sec protein translocase complex. Interacts with the SecYEG preprotein conducting channel. Has a central role in coupling the hydrolysis of ATP to the transfer of proteins into and across the cell membrane, serving as an ATP-driven molecular motor driving the stepwise translocation of polypeptide chains across the membrane. The chain is Protein translocase subunit SecA from Bacillus cereus (strain G9842).